We begin with the raw amino-acid sequence, 1387 residues long: DNA-directed RNA polymerase subunit beta (1387 aa).

It belongs to the RNA polymerase beta chain family. In terms of assembly, the RNAP catalytic core consists of 2 alpha, 1 beta, 1 beta' and 1 omega subunit. When a sigma factor is associated with the core the holoenzyme is formed, which can initiate transcription.

The enzyme catalyses RNA(n) + a ribonucleoside 5'-triphosphate = RNA(n+1) + diphosphate. Its function is as follows. DNA-dependent RNA polymerase catalyzes the transcription of DNA into RNA using the four ribonucleoside triphosphates as substrates. The chain is DNA-directed RNA polymerase subunit beta from Xanthomonas campestris pv. campestris (strain ATCC 33913 / DSM 3586 / NCPPB 528 / LMG 568 / P 25).